Reading from the N-terminus, the 554-residue chain is Inactive sesquithujene synthase B (554 aa).

Mg(2+) is bound by residues Asp-308 and Asp-312. Substrate contacts are provided by Asp-308, Asp-312, Arg-449, and Asn-452. The DDXXD motif signature appears at 308-312; it reads DDMFD. Residues Asn-452, Ser-456, and Glu-460 each coordinate Mg(2+).

The protein belongs to the terpene synthase family. In terms of assembly, monomer. Mg(2+) serves as cofactor. Requires Mn(2+) as cofactor.

It localises to the cytoplasm. The protein operates within secondary metabolite biosynthesis; terpenoid biosynthesis. Its function is as follows. Non-functional sesquiterpene synthase having less than 1% of the activity found in TPS5A. In Zea mays (Maize), this protein is Inactive sesquithujene synthase B.